Consider the following 346-residue polypeptide: Phosphoribosylformylglycinamidine cyclo-ligase (346 aa).

This sequence belongs to the AIR synthase family.

Its subcellular location is the cytoplasm. The enzyme catalyses 2-formamido-N(1)-(5-O-phospho-beta-D-ribosyl)acetamidine + ATP = 5-amino-1-(5-phospho-beta-D-ribosyl)imidazole + ADP + phosphate + H(+). It functions in the pathway purine metabolism; IMP biosynthesis via de novo pathway; 5-amino-1-(5-phospho-D-ribosyl)imidazole from N(2)-formyl-N(1)-(5-phospho-D-ribosyl)glycinamide: step 2/2. In Bacillus pumilus (strain SAFR-032), this protein is Phosphoribosylformylglycinamidine cyclo-ligase.